A 206-amino-acid polypeptide reads, in one-letter code: Histidine biosynthesis bifunctional protein HisIE (206 aa).

The interval 1–114 (MLKKINFIDI…FQVPSENLFF (114 aa)) is phosphoribosyl-AMP cyclohydrolase. A phosphoribosyl-ATP pyrophosphohydrolase region spans residues 115–206 (LHDLDCMLKF…NLKMRSNKQV (92 aa)).

In the N-terminal section; belongs to the PRA-CH family. It in the C-terminal section; belongs to the PRA-PH family.

It localises to the cytoplasm. It catalyses the reaction 1-(5-phospho-beta-D-ribosyl)-ATP + H2O = 1-(5-phospho-beta-D-ribosyl)-5'-AMP + diphosphate + H(+). The catalysed reaction is 1-(5-phospho-beta-D-ribosyl)-5'-AMP + H2O = 1-(5-phospho-beta-D-ribosyl)-5-[(5-phospho-beta-D-ribosylamino)methylideneamino]imidazole-4-carboxamide. Its pathway is amino-acid biosynthesis; L-histidine biosynthesis; L-histidine from 5-phospho-alpha-D-ribose 1-diphosphate: step 2/9. It functions in the pathway amino-acid biosynthesis; L-histidine biosynthesis; L-histidine from 5-phospho-alpha-D-ribose 1-diphosphate: step 3/9. This Buchnera aphidicola subsp. Baizongia pistaciae (strain Bp) protein is Histidine biosynthesis bifunctional protein HisIE (hisI).